Consider the following 245-residue polypeptide: Tetrahydromethanopterin S-methyltransferase subunit A 1 (245 aa).

Topologically, residues 1 to 222 are cytoplasmic; the sequence is MADKKPAADN…AGNYSGKVQG (222 aa). H84 lines the 5-hydroxybenzimidazolylcob(I)amide pocket. The helical transmembrane segment at 223–243 threads the bilayer; the sequence is IMIGLIFTLVIGFLLLMAPLL. The Extracellular segment spans residues 244–245; the sequence is GA.

This sequence belongs to the MtrA family. As to quaternary structure, the complex is composed of 8 subunits; MtrA, MtrB, MtrC, MtrD, MtrE, MtrF, MtrG and MtrH. The cofactor is 5-hydroxybenzimidazolylcob(I)amide.

The protein localises to the cell membrane. It carries out the reaction 5-methyl-5,6,7,8-tetrahydromethanopterin + coenzyme M + 2 Na(+)(in) = 5,6,7,8-tetrahydromethanopterin + methyl-coenzyme M + 2 Na(+)(out). The protein operates within one-carbon metabolism; methanogenesis from CO(2); methyl-coenzyme M from 5,10-methylene-5,6,7,8-tetrahydromethanopterin: step 2/2. Part of a complex that catalyzes the formation of methyl-coenzyme M and tetrahydromethanopterin from coenzyme M and methyl-tetrahydromethanopterin. This is an energy-conserving, sodium-ion translocating step. The protein is Tetrahydromethanopterin S-methyltransferase subunit A 1 of Methanobrevibacter ruminantium (strain ATCC 35063 / DSM 1093 / JCM 13430 / OCM 146 / M1) (Methanobacterium ruminantium).